The sequence spans 224 residues: Response regulator protein GraR (224 aa).

Residues 2-115 enclose the Response regulatory domain; sequence DILLVEDDMT…VLIAKLQAIY (114 aa). The residue at position 51 (Asp51) is a 4-aspartylphosphate. A DNA-binding region (ompR/PhoB-type) is located at residues 126–224; it reads KRVLSWQDAI…KIGKGYMAHG (99 aa).

In terms of processing, phosphorylated by GraS.

The protein resides in the cytoplasm. Its function is as follows. Member of the two-component regulatory system GraR/GraS involved in resistance against cationic antimicrobial peptides (CAMPs). In Staphylococcus saprophyticus subsp. saprophyticus (strain ATCC 15305 / DSM 20229 / NCIMB 8711 / NCTC 7292 / S-41), this protein is Response regulator protein GraR (graR).